A 258-amino-acid chain; its full sequence is Deoxyribose-phosphate aldolase (258 aa).

Residue D101 is the Proton donor/acceptor of the active site. K166 acts as the Schiff-base intermediate with acetaldehyde in catalysis. The Proton donor/acceptor role is filled by K200.

It belongs to the DeoC/FbaB aldolase family. DeoC type 2 subfamily.

The protein localises to the cytoplasm. The enzyme catalyses 2-deoxy-D-ribose 5-phosphate = D-glyceraldehyde 3-phosphate + acetaldehyde. It functions in the pathway carbohydrate degradation; 2-deoxy-D-ribose 1-phosphate degradation; D-glyceraldehyde 3-phosphate and acetaldehyde from 2-deoxy-alpha-D-ribose 1-phosphate: step 2/2. Its function is as follows. Catalyzes a reversible aldol reaction between acetaldehyde and D-glyceraldehyde 3-phosphate to generate 2-deoxy-D-ribose 5-phosphate. The chain is Deoxyribose-phosphate aldolase from Actinobacillus pleuropneumoniae serotype 7 (strain AP76).